The following is a 306-amino-acid chain: Curved DNA-binding protein (306 aa).

The 65-residue stretch at 5 to 69 (DYYAIMGVKP…QRRAEYDQMW (65 aa)) folds into the J domain.

Its subcellular location is the cytoplasm. It localises to the nucleoid. In terms of biological role, DNA-binding protein that preferentially recognizes a curved DNA sequence. It is probably a functional analog of DnaJ; displays overlapping activities with DnaJ, but functions under different conditions, probably acting as a molecular chaperone in an adaptive response to environmental stresses other than heat shock. Lacks autonomous chaperone activity; binds native substrates and targets them for recognition by DnaK. Its activity is inhibited by the binding of CbpM. In Shigella flexneri, this protein is Curved DNA-binding protein.